The sequence spans 412 residues: DNA polymerase IV 2 (412 aa).

The UmuC domain occupies isoleucine 7–glycine 192. Mg(2+) contacts are provided by aspartate 11 and aspartate 107. Glutamate 108 is an active-site residue.

Belongs to the DNA polymerase type-Y family. Monomer. Mg(2+) serves as cofactor.

It is found in the cytoplasm. It carries out the reaction DNA(n) + a 2'-deoxyribonucleoside 5'-triphosphate = DNA(n+1) + diphosphate. Its function is as follows. Poorly processive, error-prone DNA polymerase involved in untargeted mutagenesis. Copies undamaged DNA at stalled replication forks, which arise in vivo from mismatched or misaligned primer ends. These misaligned primers can be extended by PolIV. Exhibits no 3'-5' exonuclease (proofreading) activity. May be involved in translesion synthesis (TSL), in conjunction with the beta clamp from PolIII. In Bacillus subtilis (strain 168), this protein is DNA polymerase IV 2 (dinB2).